A 195-amino-acid polypeptide reads, in one-letter code: Thioredoxin reductase-like selenoprotein T (195 aa).

The signal sequence occupies residues 1-19 (MRLLLLLLVAASAVVRSDA). The cysteinyl-selenocysteine (Cys-Sec) cross-link spans 46-49 (CVSU). A non-standard amino acid (selenocysteine) is located at residue Sec49. A helical membrane pass occupies residues 85 to 103 (IASFLSVFKLVLIGLIIVG).

This sequence belongs to the SelWTH family. Selenoprotein T subfamily. In terms of processing, may contain a selenide-sulfide bond between Cys-46 and Sec-49. This bond is speculated to serve as redox-active pair.

The protein localises to the endoplasmic reticulum membrane. It carries out the reaction [thioredoxin]-dithiol + NADP(+) = [thioredoxin]-disulfide + NADPH + H(+). In terms of biological role, selenoprotein with thioredoxin reductase-like oxidoreductase activity. Protects dopaminergic neurons against oxidative stress and cell death. Involved in ADCYAP1/PACAP-induced calcium mobilization and neuroendocrine secretion. Plays a role in fibroblast anchorage and redox regulation. In gastric smooth muscle, modulates the contraction processes through the regulation of calcium release and MYLK activation. In pancreatic islets, involved in the control of glucose homeostasis, contributes to prolonged ADCYAP1/PACAP-induced insulin secretion. The protein is Thioredoxin reductase-like selenoprotein T of Bos taurus (Bovine).